The chain runs to 178 residues: MSTIDPIRYPIGTFQAPAQFRAEDVKEWIAAIRELPDALRAAVAGLNDEQLNTPYRDGGWTVAQVVHHLADASMNAFLRTKWGLTEDKPAIKPFEESEWAKTADARSLPIEPSLMLLEGLHVRWATLLESMTEADFQRLICPEGAKQAMPLYVLTALYTWHGKHHTAQIMSLRKRKGW.

Residues His68, His161, and His165 each coordinate Zn(2+).

This sequence belongs to the metal hydrolase YfiT family. As to quaternary structure, homodimer. Requires Zn(2+) as cofactor.

The protein resides in the cytoplasm. Possible metal-dependent hydrolase. The polypeptide is Putative metal-dependent hydrolase GTNG_0529 (Geobacillus thermodenitrificans (strain NG80-2)).